A 664-amino-acid chain; its full sequence is Intraflagellar transport protein 70A2 (664 aa).

TPR repeat units follow at residues 11–44, 45–78, 153–186, 188–220, 395–423, 424–456, and 458–491; these read DGEF…SSRS, RAGL…HPEL, PDGL…SGYQ, DVSY…GIRQ, QVQE…EKYI, PVLM…CNDH, and VWKL…NYDN. Residues 507–534 are a coiled coil; that stretch reads YIMTSQNEEAEELMRKIEKEEEQLSYGD. A TPR 8 repeat occupies 543-576; that stretch reads CIVNLVIGTLYCAKGNYDFGISRVIKSLEPYHKK.

It belongs to the TTC30/dfy-1/fleer family. As to quaternary structure, interacts wit the IFT B complex component IFT52.

The protein localises to the cell projection. Its subcellular location is the cilium. Functionally, required for polyglutamylation of axonemal tubulin. Plays a role in anterograde intraflagellar transport (IFT), the process by which cilia precursors are transported from the base of the cilium to the site of their incorporation at the tip. The sequence is that of Intraflagellar transport protein 70A2 (Ift70a2) from Mus musculus (Mouse).